The following is a 450-amino-acid chain: UDP-N-acetylmuramoylalanine--D-glutamate ligase (450 aa).

119–125 (GSNGKTT) serves as a coordination point for ATP.

This sequence belongs to the MurCDEF family.

The protein resides in the cytoplasm. It carries out the reaction UDP-N-acetyl-alpha-D-muramoyl-L-alanine + D-glutamate + ATP = UDP-N-acetyl-alpha-D-muramoyl-L-alanyl-D-glutamate + ADP + phosphate + H(+). The protein operates within cell wall biogenesis; peptidoglycan biosynthesis. Cell wall formation. Catalyzes the addition of glutamate to the nucleotide precursor UDP-N-acetylmuramoyl-L-alanine (UMA). The sequence is that of UDP-N-acetylmuramoylalanine--D-glutamate ligase from Streptococcus thermophilus (strain ATCC BAA-491 / LMD-9).